Here is a 348-residue protein sequence, read N- to C-terminus: Guanine nucleotide-binding protein alpha-13 subunit (348 aa).

Glycine 2 carries the N-myristoyl glycine lipid modification. Cysteine 3 carries the S-palmitoyl cysteine lipid modification. Positions 34–348 constitute a G-alpha domain; it reads SHIRLLLLGS…VFKDIAKRKK (315 aa). The segment at 37-50 is G1 motif; it reads RLLLLGSAESGKTT. Residues 42–49, 176–182, 201–205, 270–273, and alanine 326 contribute to the GTP site; these read GSAESGKT, IMAYVPT, DIGGQ, and NEID. Residues 174-182 are G2 motif; that stretch reads DLIMAYVPT. Position 182 (threonine 182) interacts with Mg(2+). The tract at residues 197 to 206 is G3 motif; that stretch reads FQLFDIGGQK. Positions 266–273 are G4 motif; sequence YLFLNEID. Residues 324–329 are G5 motif; the sequence is CIAIDT.

This sequence belongs to the G-alpha family. G proteins are composed of 3 units; alpha, beta and gamma. The alpha chain contains the guanine nucleotide binding site.

In terms of biological role, guanine nucleotide-binding proteins (G proteins) are involved as modulators or transducers in various transmembrane signaling systems. The protein is Guanine nucleotide-binding protein alpha-13 subunit (gpa-13) of Caenorhabditis elegans.